We begin with the raw amino-acid sequence, 753 residues long: Photosystem I P700 chlorophyll a apoprotein A1 (753 aa).

The next 8 membrane-spanning stretches (helical) occupy residues 73-96 (IFSA…YHGA), 159-182 (LYCT…FHYH), 198-222 (LNHH…HVSL), 294-312 (TAHH…GHMY), 349-372 (WHAQ…HHMY), 388-414 (LSLF…IFMV), 436-458 (AIVS…LYIH), and 534-552 (FLVH…LILL). Cysteine 576 and cysteine 585 together coordinate [4Fe-4S] cluster. The next 2 membrane-spanning stretches (helical) occupy residues 592 to 613 (HVFL…HFSW) and 667 to 689 (LSAY…MFLF). Position 678 (histidine 678) interacts with chlorophyll a'. Methionine 686 and tyrosine 694 together coordinate chlorophyll a. Position 695 (tryptophan 695) interacts with phylloquinone. A helical transmembrane segment spans residues 727–747 (AVGVAHYLLGGIVTTWAFFLA).

The protein belongs to the PsaA/PsaB family. As to quaternary structure, the PsaA/B heterodimer binds the P700 chlorophyll special pair and subsequent electron acceptors. PSI consists of a core antenna complex that captures photons, and an electron transfer chain that converts photonic excitation into a charge separation. The eukaryotic PSI reaction center is composed of at least 11 subunits. The cofactor is P700 is a chlorophyll a/chlorophyll a' dimer, A0 is one or more chlorophyll a, A1 is one or both phylloquinones and FX is a shared 4Fe-4S iron-sulfur center..

It localises to the plastid. Its subcellular location is the chloroplast thylakoid membrane. It carries out the reaction reduced [plastocyanin] + hnu + oxidized [2Fe-2S]-[ferredoxin] = oxidized [plastocyanin] + reduced [2Fe-2S]-[ferredoxin]. In terms of biological role, psaA and PsaB bind P700, the primary electron donor of photosystem I (PSI), as well as the electron acceptors A0, A1 and FX. PSI is a plastocyanin-ferredoxin oxidoreductase, converting photonic excitation into a charge separation, which transfers an electron from the donor P700 chlorophyll pair to the spectroscopically characterized acceptors A0, A1, FX, FA and FB in turn. Oxidized P700 is reduced on the lumenal side of the thylakoid membrane by plastocyanin. The chain is Photosystem I P700 chlorophyll a apoprotein A1 from Pinus thunbergii (Japanese black pine).